We begin with the raw amino-acid sequence, 375 residues long: Probable aminomethyltransferase (375 aa).

Belongs to the GcvT family. In terms of assembly, the glycine cleavage system is composed of four proteins: P, T, L and H.

The enzyme catalyses N(6)-[(R)-S(8)-aminomethyldihydrolipoyl]-L-lysyl-[protein] + (6S)-5,6,7,8-tetrahydrofolate = N(6)-[(R)-dihydrolipoyl]-L-lysyl-[protein] + (6R)-5,10-methylene-5,6,7,8-tetrahydrofolate + NH4(+). Functionally, the glycine cleavage system catalyzes the degradation of glycine. The sequence is that of Probable aminomethyltransferase from Aeropyrum pernix (strain ATCC 700893 / DSM 11879 / JCM 9820 / NBRC 100138 / K1).